A 409-amino-acid polypeptide reads, in one-letter code: Nucleoprotein (409 aa).

Disordered stretches follow at residues 1–32, 44–69, 121–145, 164–195, and 238–259; these read MASG…SSGN, LNSP…QQHG, ADVK…LRFS, RSGR…SEGD, and VDQV…DKMN. Over residues 15 to 31 the composition is skewed to low complexity; sequence PVIKLGGPKPPKVGSSG. Residues 29-160 are RNA-binding; that stretch reads SSGNASWFQA…GNFRWDFIPL (132 aa). In terms of domain architecture, CoV N NTD spans 31-156; the sequence is GNASWFQAIK…GGPDGNFRWD (126 aa). Over residues 164-179 the composition is skewed to low complexity; sequence RSGRSTAASSAASSRA. Basic and acidic residues-rich tracts occupy residues 180–192 and 247–259; these read PSRD…RSGS and KGKE…DKMN. Residues Ser-190 and Ser-192 each carry the phosphoserine; by host modification. The region spanning 215-331 is the CoV N CTD domain; it reads TKAKADEMAH…QCVDGVGTRP (117 aa). Residues 226-333 are dimerization; that stretch reads RYCKRTIPPG…VDGVGTRPKD (108 aa). Cysteines 320 and 323 form a disulfide. The interval 326–409 is disordered; that stretch reads GVGTRPKDDE…GDSALGENEL (84 aa). Over residues 341–358 the composition is skewed to low complexity; the sequence is RSSSRPATRTSSPALRQQ. The segment covering 368–384 has biased composition (basic and acidic residues); that stretch reads KQDDEVDKALTSDEERN. Thr-378 carries the phosphothreonine; by host modification. Position 379 is a phosphoserine; by host (Ser-379).

It belongs to the gammacoronavirus nucleocapsid protein family. Homooligomer. Both monomeric and oligomeric forms interact with RNA. Interacts with protein M. Interacts with NSP3; this interaction serves to tether the genome to the newly translated replicase-transcriptase complex at a very early stage of infection. In terms of processing, ADP-ribosylated. The ADP-ribosylation is retained in the virion during infection. Phosphorylated on serine and threonine residues.

The protein localises to the virion. Its subcellular location is the host endoplasmic reticulum-Golgi intermediate compartment. The protein resides in the host Golgi apparatus. Its function is as follows. Packages the positive strand viral genome RNA into a helical ribonucleocapsid (RNP) and plays a fundamental role during virion assembly through its interactions with the viral genome and membrane protein M. Plays an important role in enhancing the efficiency of subgenomic viral RNA transcription as well as viral replication. This Gallus gallus (Chicken) protein is Nucleoprotein.